We begin with the raw amino-acid sequence, 242 residues long: Biosynthetic peptidoglycan transglycosylase (242 aa).

The chain crosses the membrane as a helical span at residues 18 to 38 (VIMAVLCIAILYQLWMFSLVV).

The protein belongs to the glycosyltransferase 51 family.

Its subcellular location is the cell inner membrane. The catalysed reaction is [GlcNAc-(1-&gt;4)-Mur2Ac(oyl-L-Ala-gamma-D-Glu-L-Lys-D-Ala-D-Ala)](n)-di-trans,octa-cis-undecaprenyl diphosphate + beta-D-GlcNAc-(1-&gt;4)-Mur2Ac(oyl-L-Ala-gamma-D-Glu-L-Lys-D-Ala-D-Ala)-di-trans,octa-cis-undecaprenyl diphosphate = [GlcNAc-(1-&gt;4)-Mur2Ac(oyl-L-Ala-gamma-D-Glu-L-Lys-D-Ala-D-Ala)](n+1)-di-trans,octa-cis-undecaprenyl diphosphate + di-trans,octa-cis-undecaprenyl diphosphate + H(+). Its pathway is cell wall biogenesis; peptidoglycan biosynthesis. Functionally, peptidoglycan polymerase that catalyzes glycan chain elongation from lipid-linked precursors. In Bordetella bronchiseptica (strain ATCC BAA-588 / NCTC 13252 / RB50) (Alcaligenes bronchisepticus), this protein is Biosynthetic peptidoglycan transglycosylase.